The primary structure comprises 180 residues: Endoribonuclease YbeY (180 aa).

The Zn(2+) site is built by His-136, His-140, and His-146.

This sequence belongs to the endoribonuclease YbeY family. It depends on Zn(2+) as a cofactor.

It localises to the cytoplasm. Its function is as follows. Single strand-specific metallo-endoribonuclease involved in late-stage 70S ribosome quality control and in maturation of the 3' terminus of the 16S rRNA. This Synechococcus sp. (strain CC9902) protein is Endoribonuclease YbeY.